The following is a 263-amino-acid chain: Hydroxyacylglutathione hydrolase (263 aa).

Zn(2+) contacts are provided by H55, H57, D59, H60, H117, D134, and H172.

Belongs to the metallo-beta-lactamase superfamily. Glyoxalase II family. Monomer. The cofactor is Zn(2+).

It carries out the reaction an S-(2-hydroxyacyl)glutathione + H2O = a 2-hydroxy carboxylate + glutathione + H(+). The protein operates within secondary metabolite metabolism; methylglyoxal degradation; (R)-lactate from methylglyoxal: step 2/2. Its function is as follows. Thiolesterase that catalyzes the hydrolysis of S-D-lactoyl-glutathione to form glutathione and D-lactic acid. The protein is Hydroxyacylglutathione hydrolase of Shewanella baltica (strain OS223).